Consider the following 601-residue polypeptide: Elongation factor 4 (601 aa).

The tr-type G domain maps to 6 to 188 (DHIRNFSIVA…AIVHQLPPPR (183 aa)). GTP contacts are provided by residues 18–23 (DHGKST) and 135–138 (NKVD).

This sequence belongs to the TRAFAC class translation factor GTPase superfamily. Classic translation factor GTPase family. LepA subfamily.

The protein resides in the cell inner membrane. The catalysed reaction is GTP + H2O = GDP + phosphate + H(+). In terms of biological role, required for accurate and efficient protein synthesis under certain stress conditions. May act as a fidelity factor of the translation reaction, by catalyzing a one-codon backward translocation of tRNAs on improperly translocated ribosomes. Back-translocation proceeds from a post-translocation (POST) complex to a pre-translocation (PRE) complex, thus giving elongation factor G a second chance to translocate the tRNAs correctly. Binds to ribosomes in a GTP-dependent manner. This Mesorhizobium japonicum (strain LMG 29417 / CECT 9101 / MAFF 303099) (Mesorhizobium loti (strain MAFF 303099)) protein is Elongation factor 4.